A 262-amino-acid polypeptide reads, in one-letter code: Nurim (262 aa).

The Nuclear segment spans residues 1–4 (MAPA). A helical transmembrane segment spans residues 5–28 (LLLIPAALASFILAFGTGVEFVRF). Residues 29-58 (TSLRPLLGGIPESGGPDARQGWLAALQDRS) lie on the Perinuclear space side of the membrane. Residues 59-80 (ILAPLAWDLGLLLLFVGQHSLM) traverse the membrane as a helical segment. At 81-97 (AAERVKAWTSRYFGVLQ) the chain is on the nuclear side. The chain crosses the membrane as a helical span at residues 98-114 (RSLYVACTALALQLVMR). Residues 115 to 133 (YWEPIPKGPVLWEARAEPW) are Perinuclear space-facing. The chain crosses the membrane as a helical span at residues 134-164 (ATWVPLLCFVLHVISWLLIFSILLVFDYAEL). Over 165–191 (MGLKQVYYHVLGLGEPLALKSPRALRL) the chain is Nuclear. The chain crosses the membrane as a helical span at residues 192 to 210 (FSHLRHPVCVELLTVLWVV). Residues 211–216 (PTLGTD) lie on the Perinuclear space side of the membrane. A helical transmembrane segment spans residues 217–234 (RLLLAFLLTLYLGLAHGL). The Nuclear segment spans residues 235 to 262 (DQQDLRYLRAQLQRKLHLLSRPQDGEAE).

Belongs to the nurim family.

Its subcellular location is the nucleus inner membrane. The sequence is that of Nurim (NRM) from Homo sapiens (Human).